We begin with the raw amino-acid sequence, 142 residues long: Calmodulin-alpha (142 aa).

Ala2 is modified (N-acetylalanine). EF-hand domains are found at residues 8–43 (EQIA…LGQN), 44–79 (PTEA…KMKD), 81–116 (DSEE…LGEK), and 117–142 (LTDE…YEEF). 15 residues coordinate Ca(2+): Asp21, Asp23, Asp25, Thr27, Glu32, Asp57, Asp59, Asn61, Thr63, Glu68, Asp94, Asp96, Asn98, Tyr100, and Glu105. Residue Lys116 is modified to N6,N6,N6-trimethyllysine. The Ca(2+) site is built by Asp130, Asp132, Asp134, Gln136, and Glu141.

This sequence belongs to the calmodulin family.

Functionally, calmodulin mediates the control of a large number of enzymes, ion channels and other proteins by Ca(2+). Among the enzymes to be stimulated by the calmodulin-Ca(2+) complex are a number of protein kinases and phosphatases. In Arbacia punctulata (Punctuate sea urchin), this protein is Calmodulin-alpha.